The chain runs to 124 residues: MRKPIEHTADIAYEISGNSYEELLEEARNILLEEEGIVLDTEEKEKMYPLEETEDAFFDTVNDWILEISKGWAPWRIKREGNELKVTFRKIRKKEGTEIKALTYHLLKFERDGDVLKTKVVFDT.

Positions 7, 10, 123, and 124 each coordinate Ca(2+).

This sequence belongs to the archease family.

Activates the tRNA-splicing ligase complex by facilitating the enzymatic turnover of catalytic subunit RtcB. Acts by promoting the guanylylation of RtcB, a key intermediate step in tRNA ligation. Can also alter the NTP specificity of RtcB such that ATP, dGTP or ITP is used efficiently. May also act as a chaperone or modulator of proteins involved in DNA or RNA processing. The protein is Protein archease of Thermotoga maritima (strain ATCC 43589 / DSM 3109 / JCM 10099 / NBRC 100826 / MSB8).